We begin with the raw amino-acid sequence, 882 residues long: Valine--tRNA ligase (882 aa).

The 'HIGH' region signature appears at 45–55 (PNVTGKLHLGH). The 'KMSKS' region motif lies at 519-523 (KMSKS). An ATP-binding site is contributed by lysine 522. Residues 808–877 (LADLLNVEEE…DATQERIVEM (70 aa)) are a coiled coil.

This sequence belongs to the class-I aminoacyl-tRNA synthetase family. ValS type 1 subfamily. As to quaternary structure, monomer.

The protein localises to the cytoplasm. It catalyses the reaction tRNA(Val) + L-valine + ATP = L-valyl-tRNA(Val) + AMP + diphosphate. Its function is as follows. Catalyzes the attachment of valine to tRNA(Val). As ValRS can inadvertently accommodate and process structurally similar amino acids such as threonine, to avoid such errors, it has a 'posttransfer' editing activity that hydrolyzes mischarged Thr-tRNA(Val) in a tRNA-dependent manner. This chain is Valine--tRNA ligase, found in Streptococcus pyogenes serotype M6 (strain ATCC BAA-946 / MGAS10394).